Here is a 152-residue protein sequence, read N- to C-terminus: Protein-export protein SecB (152 aa).

This sequence belongs to the SecB family. Homotetramer, a dimer of dimers. One homotetramer interacts with 1 SecA dimer.

It localises to the cytoplasm. Its function is as follows. One of the proteins required for the normal export of preproteins out of the cell cytoplasm. It is a molecular chaperone that binds to a subset of precursor proteins, maintaining them in a translocation-competent state. It also specifically binds to its receptor SecA. This Dechloromonas aromatica (strain RCB) protein is Protein-export protein SecB.